Consider the following 720-residue polypeptide: Engulfment and cell motility protein 3 (720 aa).

Residues 307–479 (EQRDQLQALR…VVREQLARTL (173 aa)) form the ELMO domain. One can recognise a PH domain in the interval 542 to 664 (RLCEGMLFRK…TDGLSALLGS (123 aa)). Residues 696 to 706 (PEQPPPVPPPP) carry the SH3-binding motif.

Probably interacts directly with the SH3-domain of DOCK1 via its SH3-binding site. Part of a complex with DOCK1 and RAC1. Interacts with ADGRB3.

It is found in the cytoplasm. Involved in cytoskeletal rearrangements required for phagocytosis of apoptotic cells and cell motility. Acts in association with DOCK1 and CRK. Was initially proposed to be required in complex with DOCK1 to activate Rac Rho small GTPases. May enhance the guanine nucleotide exchange factor (GEF) activity of DOCK1. The chain is Engulfment and cell motility protein 3 (Elmo3) from Mus musculus (Mouse).